Reading from the N-terminus, the 367-residue chain is 3-dehydroquinate synthase (367 aa).

Residues 108-112, 132-133, K145, and K154 each bind NAD(+); these read GVIGD and TT. Zn(2+) is bound by residues E187, H249, and H267.

This sequence belongs to the sugar phosphate cyclases superfamily. Dehydroquinate synthase family. Co(2+) is required as a cofactor. Requires Zn(2+) as cofactor. The cofactor is NAD(+).

Its subcellular location is the cytoplasm. The catalysed reaction is 7-phospho-2-dehydro-3-deoxy-D-arabino-heptonate = 3-dehydroquinate + phosphate. It functions in the pathway metabolic intermediate biosynthesis; chorismate biosynthesis; chorismate from D-erythrose 4-phosphate and phosphoenolpyruvate: step 2/7. Functionally, catalyzes the conversion of 3-deoxy-D-arabino-heptulosonate 7-phosphate (DAHP) to dehydroquinate (DHQ). This Paracoccus denitrificans (strain Pd 1222) protein is 3-dehydroquinate synthase.